The following is a 197-amino-acid chain: Recombination protein RecR (197 aa).

The C4-type zinc-finger motif lies at 56–71 (CSVCGNFDTIDPCAIC). The 96-residue stretch at 79-174 (SMLCVVEDVA…TVSGLAHGVP (96 aa)) folds into the Toprim domain.

This sequence belongs to the RecR family.

In terms of biological role, may play a role in DNA repair. It seems to be involved in an RecBC-independent recombinational process of DNA repair. It may act with RecF and RecO. The chain is Recombination protein RecR from Paramagnetospirillum magneticum (strain ATCC 700264 / AMB-1) (Magnetospirillum magneticum).